Here is a 30-residue protein sequence, read N- to C-terminus: Glutathione S-transferase (30 aa).

It belongs to the GST superfamily. Monomer and homodimer.

The protein resides in the cytoplasm. The catalysed reaction is RX + glutathione = an S-substituted glutathione + a halide anion + H(+). In terms of biological role, conjugation of reduced glutathione to a wide number of exogenous and endogenous hydrophobic electrophiles. The chain is Glutathione S-transferase from Pseudomonas fluorescens.